We begin with the raw amino-acid sequence, 350 residues long: Galactokinase (350 aa).

14–17 (EHTD) is a binding site for substrate. ATP contacts are provided by residues S46 and 96 to 102 (GAGLSSS). Mg(2+)-binding residues include S102 and E134. D146 functions as the Proton acceptor in the catalytic mechanism. Y196 is a substrate binding site.

Belongs to the GHMP kinase family. GalK subfamily.

Its subcellular location is the cytoplasm. The enzyme catalyses alpha-D-galactose + ATP = alpha-D-galactose 1-phosphate + ADP + H(+). Its pathway is carbohydrate metabolism; galactose metabolism. Its function is as follows. Catalyzes the transfer of the gamma-phosphate of ATP to D-galactose to form alpha-D-galactose-1-phosphate (Gal-1-P). This is Galactokinase from Thermotoga neapolitana (strain ATCC 49049 / DSM 4359 / NBRC 107923 / NS-E).